The chain runs to 159 residues: Phosphopantetheine adenylyltransferase (159 aa).

A substrate-binding site is contributed by serine 8. Residues serine 8–phenylalanine 9 and histidine 16 contribute to the ATP site. Residues lysine 40, leucine 72, and arginine 86 each coordinate substrate. ATP is bound by residues glycine 87 to arginine 89, glutamate 97, and tyrosine 122 to serine 128.

It belongs to the bacterial CoaD family. Homohexamer. The cofactor is Mg(2+).

The protein resides in the cytoplasm. It carries out the reaction (R)-4'-phosphopantetheine + ATP + H(+) = 3'-dephospho-CoA + diphosphate. It participates in cofactor biosynthesis; coenzyme A biosynthesis; CoA from (R)-pantothenate: step 4/5. Reversibly transfers an adenylyl group from ATP to 4'-phosphopantetheine, yielding dephospho-CoA (dPCoA) and pyrophosphate. This chain is Phosphopantetheine adenylyltransferase, found in Thermosipho melanesiensis (strain DSM 12029 / CIP 104789 / BI429).